A 95-amino-acid polypeptide reads, in one-letter code: Aspartyl/glutamyl-tRNA(Asn/Gln) amidotransferase subunit C (95 aa).

It belongs to the GatC family. Heterotrimer of A, B and C subunits.

The catalysed reaction is L-glutamyl-tRNA(Gln) + L-glutamine + ATP + H2O = L-glutaminyl-tRNA(Gln) + L-glutamate + ADP + phosphate + H(+). It catalyses the reaction L-aspartyl-tRNA(Asn) + L-glutamine + ATP + H2O = L-asparaginyl-tRNA(Asn) + L-glutamate + ADP + phosphate + 2 H(+). In terms of biological role, allows the formation of correctly charged Asn-tRNA(Asn) or Gln-tRNA(Gln) through the transamidation of misacylated Asp-tRNA(Asn) or Glu-tRNA(Gln) in organisms which lack either or both of asparaginyl-tRNA or glutaminyl-tRNA synthetases. The reaction takes place in the presence of glutamine and ATP through an activated phospho-Asp-tRNA(Asn) or phospho-Glu-tRNA(Gln). The protein is Aspartyl/glutamyl-tRNA(Asn/Gln) amidotransferase subunit C of Rhodopseudomonas palustris (strain BisA53).